The primary structure comprises 387 residues: Double C2-like domain-containing protein gamma (387 aa).

2 consecutive C2 domains span residues 83–209 and 243–376; these read ALGT…DICL and ERGR…ELWH. The Ca(2+) site is built by Asp-274, Asp-280, Asp-334, Asp-336, and Asp-342.

It depends on Ca(2+) as a cofactor.

In terms of biological role, may be involved in regulation of vesicular trafficking. In vitro, does not bind calcium and phospholipids. The sequence is that of Double C2-like domain-containing protein gamma (Doc2g) from Mus musculus (Mouse).